The sequence spans 68 residues: Disintegrin EMS11A (68 aa).

A Disintegrin domain is found at 1 to 65 (NSAHPCCDPV…DCPRNRYKGK (65 aa)). 4 disulfides stabilise this stretch: Cys6/Cys29, Cys20/Cys26, Cys25/Cys50, and Cys38/Cys57. The short motif at 42-44 (MLD) is the Cell attachment site; atypical (MLD) element.

The protein belongs to the disintegrin family. Dimeric disintegrin subfamily. Heterodimer; disulfide-linked. As to expression, expressed by the venom gland.

The protein resides in the secreted. Poor inhibitor of platelet aggregation. The disintegrin inhibits the adhesion of both the alpha-4/beta-1 (ITGA4/ITGB1) and the alpha-5/beta-1 (ITGA5/ITGB1) integrins to VCAM-1 and fibronectin respectively with almost the same degree of specificity. Inhibition on alpha-IIb/beta-3 (ITGA2B/ITGB3) is low. This Echis multisquamatus (Central Asian sand viper) protein is Disintegrin EMS11A.